Reading from the N-terminus, the 1102-residue chain is Carbamoyl phosphate synthase large chain (1102 aa).

The carboxyphosphate synthetic domain stretch occupies residues 1-408 (MPKRSDIQSV…ALQKALRSLE (408 aa)). 12 residues coordinate ATP: Arg-129, Arg-175, Gly-181, Gly-182, Glu-214, Ile-216, Glu-221, Gly-247, Val-248, His-249, Gln-291, and Glu-305. The ATP-grasp 1 domain maps to 137 to 334 (EAVKEKIGYG…IAKIAAKLAV (198 aa)). Residues Gln-291, Glu-305, and Asn-307 each coordinate Mg(2+). The Mn(2+) site is built by Gln-291, Glu-305, and Asn-307. The interval 409–551 (KKGSQFAFTG…YFYSSYDEES (143 aa)) is oligomerization domain. The carbamoyl phosphate synthetic domain stretch occupies residues 552–954 (EVAPRTKPAV…AYAKSQAGAY (403 aa)). Residues 682-873 (GRVLAEAGLP…LAKAAARISL (192 aa)) form the ATP-grasp 2 domain. ATP is bound by residues Arg-718, Arg-757, Leu-759, Glu-764, Gly-789, Ile-790, His-791, Ser-792, Gln-832, and Glu-844. Mg(2+)-binding residues include Gln-832, Glu-844, and Asn-846. Positions 832, 844, and 846 each coordinate Mn(2+). An MGS-like domain is found at 955–1100 (GPLPTAGRAF…QEHAEHLTAA (146 aa)). Residues 955-1102 (GPLPTAGRAF…HAEHLTAARD (148 aa)) form an allosteric domain region.

Belongs to the CarB family. In terms of assembly, composed of two chains; the small (or glutamine) chain promotes the hydrolysis of glutamine to ammonia, which is used by the large (or ammonia) chain to synthesize carbamoyl phosphate. Tetramer of heterodimers (alpha,beta)4. Mg(2+) serves as cofactor. Mn(2+) is required as a cofactor.

It carries out the reaction hydrogencarbonate + L-glutamine + 2 ATP + H2O = carbamoyl phosphate + L-glutamate + 2 ADP + phosphate + 2 H(+). The enzyme catalyses hydrogencarbonate + NH4(+) + 2 ATP = carbamoyl phosphate + 2 ADP + phosphate + 2 H(+). Its pathway is amino-acid biosynthesis; L-arginine biosynthesis; carbamoyl phosphate from bicarbonate: step 1/1. It functions in the pathway pyrimidine metabolism; UMP biosynthesis via de novo pathway; (S)-dihydroorotate from bicarbonate: step 1/3. Large subunit of the glutamine-dependent carbamoyl phosphate synthetase (CPSase). CPSase catalyzes the formation of carbamoyl phosphate from the ammonia moiety of glutamine, carbonate, and phosphate donated by ATP, constituting the first step of 2 biosynthetic pathways, one leading to arginine and/or urea and the other to pyrimidine nucleotides. The large subunit (synthetase) binds the substrates ammonia (free or transferred from glutamine from the small subunit), hydrogencarbonate and ATP and carries out an ATP-coupled ligase reaction, activating hydrogencarbonate by forming carboxy phosphate which reacts with ammonia to form carbamoyl phosphate. The sequence is that of Carbamoyl phosphate synthase large chain from Streptomyces griseus subsp. griseus (strain JCM 4626 / CBS 651.72 / NBRC 13350 / KCC S-0626 / ISP 5235).